The chain runs to 93 residues: Putative regulatory protein Amet_2791 (93 aa).

It belongs to the RemA family.

This is Putative regulatory protein Amet_2791 from Alkaliphilus metalliredigens (strain QYMF).